A 303-amino-acid chain; its full sequence is Methionyl-tRNA formyltransferase (303 aa).

108 to 111 provides a ligand contact to (6S)-5,6,7,8-tetrahydrofolate; the sequence is SDLP.

Belongs to the Fmt family.

It catalyses the reaction L-methionyl-tRNA(fMet) + (6R)-10-formyltetrahydrofolate = N-formyl-L-methionyl-tRNA(fMet) + (6S)-5,6,7,8-tetrahydrofolate + H(+). Its function is as follows. Attaches a formyl group to the free amino group of methionyl-tRNA(fMet). The formyl group appears to play a dual role in the initiator identity of N-formylmethionyl-tRNA by promoting its recognition by IF2 and preventing the misappropriation of this tRNA by the elongation apparatus. The polypeptide is Methionyl-tRNA formyltransferase (Rickettsia canadensis (strain McKiel)).